The chain runs to 61 residues: UPF0370 protein Spro_3503 (61 aa).

The helical transmembrane segment at 3-23 (WLADYWWIILLILVGMIISGI) threads the bilayer. Basic and acidic residues predominate over residues 38–48 (KPELPPHRDNN). The segment at 38–61 (KPELPPHRDNNAEWDDDDDWPKKK) is disordered. A compositionally biased stretch (acidic residues) spans 49–61 (AEWDDDDDWPKKK).

This sequence belongs to the UPF0370 family.

Its subcellular location is the cell membrane. In Serratia proteamaculans (strain 568), this protein is UPF0370 protein Spro_3503.